The primary structure comprises 253 residues: Zwei Ig domain protein zig-4 (253 aa).

Positions 1 to 16 (MFAIALLSFLVVLINA) are cleaved as a signal peptide. Ig-like C2-type domains lie at 43–146 (PAKI…AEVE) and 162–245 (PEIV…TFLY). 2 disulfide bridges follow: C67–C130 and C183–C229.

Expressed in PVT, ASK, BAG, M2 and ASI neurons. In L1 larvae, expressed in pharyngeal ectoderm and mesoderm.

Its subcellular location is the secreted. In terms of biological role, required for maintaining axon position of PVQ and PVP neurons postembryonically in the ventral nerve cord (VNC) by preventing axons drifting into the opposite side of the VNC that could occur during body growth and movement. This Caenorhabditis elegans protein is Zwei Ig domain protein zig-4.